The chain runs to 389 residues: Adenylyltransferase and sulfurtransferase uba4 (389 aa).

Residues G40, D61, 68–72, K85, and 129–130 each bind ATP; these read SNLHR and DT. The Zn(2+) site is built by C171 and C174. Residue C188 is the Glycyl thioester intermediate; for adenylyltransferase activity of the active site. Positions 252 and 255 each coordinate Zn(2+). Residues 298 to 387 form the Rhodanese domain; sequence AQRAPYLVDV…WSRQIDPNFP (90 aa). The active-site Cysteine persulfide intermediate is C347.

In the N-terminal section; belongs to the HesA/MoeB/ThiF family. UBA4 subfamily. The cofactor is Zn(2+).

The protein localises to the cytoplasm. The protein resides in the cytosol. The catalysed reaction is [molybdopterin-synthase sulfur-carrier protein]-C-terminal Gly-Gly + ATP + H(+) = [molybdopterin-synthase sulfur-carrier protein]-C-terminal Gly-Gly-AMP + diphosphate. It catalyses the reaction [molybdopterin-synthase sulfur-carrier protein]-C-terminal Gly-Gly-AMP + S-sulfanyl-L-cysteinyl-[cysteine desulfurase] + AH2 = [molybdopterin-synthase sulfur-carrier protein]-C-terminal-Gly-aminoethanethioate + L-cysteinyl-[cysteine desulfurase] + A + AMP + 2 H(+). Its pathway is tRNA modification; 5-methoxycarbonylmethyl-2-thiouridine-tRNA biosynthesis. The protein operates within cofactor biosynthesis; molybdopterin biosynthesis. Its function is as follows. Plays a central role in 2-thiolation of mcm(5)S(2)U at tRNA wobble positions of cytosolic tRNA(Lys), tRNA(Glu) and tRNA(Gln). Also essential during biosynthesis of the molybdenum cofactor. Acts by mediating the C-terminal thiocarboxylation of sulfur carriers URM1 and CNX5/MOCS2A. Its N-terminus first activates urm1 and mocs2a as acyl-adenylates (-COAMP), then the persulfide sulfur on the catalytic cysteine is transferred to URM1 and CNX5/MOCS2A to form thiocarboxylation (-COSH) of their C-terminus. The reaction probably involves hydrogen sulfide that is generated from the persulfide intermediate and that acts as a nucleophile towards URM1 and CNX5/MOCS2A. Subsequently, a transient disulfide bond is formed. Does not use thiosulfate as sulfur donor; NFS1 probably acting as a sulfur donor for thiocarboxylation reactions. Required for growth on nitrate as a sole nitrogen source. The sequence is that of Adenylyltransferase and sulfurtransferase uba4 from Ogataea parapolymorpha (strain ATCC 26012 / BCRC 20466 / JCM 22074 / NRRL Y-7560 / DL-1) (Yeast).